Consider the following 215-residue polypeptide: S-crystallin 4 (215 aa).

One can recognise a GST N-terminal domain in the interval 2 to 80 (PSYTLHYFNH…YLAREFGFHG (79 aa)). In terms of domain architecture, GST C-terminal spans 82–215 (NNMDMARVDY…YLQKRSRTEF (134 aa)).

This sequence belongs to the GST superfamily. Lens.

S-crystallins are structural components of squids and octopi eye lens. Contains relatively little if any GST activity. The sequence is that of S-crystallin 4 from Enteroctopus dofleini (North Pacific giant octopus).